The sequence spans 343 residues: F17g-G fimbrial adhesin (343 aa).

The signal sequence occupies residues Met1–Ala22. The interval Ala23 to Val199 is receptor-binding lectin domain. Residues Ala65 to Asn66, Asp110 to Thr111, and Ser138 to Gly141 contribute to the a carbohydrate site. Cys75 and Cys132 are joined by a disulfide. Positions Thr200–Gln343 are fimbrillin-binding domain. Residues Leu287 to Gly307 are disordered. The segment covering Asn298–Gly307 has biased composition (polar residues).

The protein belongs to the fimbrial protein family.

It is found in the fimbrium. Functionally, essential fimbrial adhesion factor that mediates binding to N-acetylglucosamine-containing receptors in the host intestinal microvilli, leading to colonization of the intestinal tissue, and diarrhea or septicemia. Also confers adhesiveness to laminin and basement membranes. May be involved in the initiation of polymerization of fimbrillin monomers during fimbrial filament biogenesis. The chain is F17g-G fimbrial adhesin (f17gG) from Escherichia coli.